The sequence spans 164 residues: UPF0304 protein YfbU (164 aa).

Belongs to the UPF0304 family.

The sequence is that of UPF0304 protein YfbU from Escherichia coli O139:H28 (strain E24377A / ETEC).